Consider the following 204-residue polypeptide: SOSS complex subunit B homolog (204 aa).

A DNA-binding region (OB) is located at residues 24–94 (IVLEVGVATV…TLYSGKNGEV (71 aa)). Residues 115-204 (RAEQQAVANP…GRGGLKGERR (90 aa)) form a disordered region. Low complexity-rich tracts occupy residues 122 to 131 (ANPAATPAGL) and 139 to 183 (GLPA…QTTT). Residues 187–198 (TRGGRGGGGRGG) are compositionally biased toward gly residues.

This sequence belongs to the SOSS-B family.

This chain is SOSS complex subunit B homolog, found in Drosophila melanogaster (Fruit fly).